A 98-amino-acid chain; its full sequence is UPF0235 protein MJ0618 (98 aa).

Belongs to the UPF0235 family.

The protein is UPF0235 protein MJ0618 of Methanocaldococcus jannaschii (strain ATCC 43067 / DSM 2661 / JAL-1 / JCM 10045 / NBRC 100440) (Methanococcus jannaschii).